The sequence spans 339 residues: DNA-directed RNA polymerase subunit alpha (339 aa).

The alpha N-terminal domain (alpha-NTD) stretch occupies residues 1–235 (MTIQKNWQEL…DQLNVFVNFE (235 aa)). The segment at 251-339 (FNPAFLKKVD…ELAKRFEDHY (89 aa)) is alpha C-terminal domain (alpha-CTD).

The protein belongs to the RNA polymerase alpha chain family. Homodimer. The RNAP catalytic core consists of 2 alpha, 1 beta, 1 beta' and 1 omega subunit. When a sigma factor is associated with the core the holoenzyme is formed, which can initiate transcription.

The catalysed reaction is RNA(n) + a ribonucleoside 5'-triphosphate = RNA(n+1) + diphosphate. Functionally, DNA-dependent RNA polymerase catalyzes the transcription of DNA into RNA using the four ribonucleoside triphosphates as substrates. The protein is DNA-directed RNA polymerase subunit alpha of Rhodopseudomonas palustris (strain BisB5).